Here is a 1059-residue protein sequence, read N- to C-terminus: DNA (cytosine-5)-methyltransferase CMT1 (1059 aa).

Disordered regions lie at residues 1–196 and 230–272; these read MVPE…GALA and CVGE…DEAR. A compositionally biased stretch (acidic residues) spans 29–41; the sequence is AEAEAVADLDEID. Basic and acidic residues-rich tracts occupy residues 42-79, 92-129, and 147-157; these read REMS…EKAA, REMP…EKAA, and SRGKRQRGVEK. Positions 158 to 167 are enriched in basic residues; the sequence is VKRRTRKKTA. The segment covering 252–262 has biased composition (basic and acidic residues); it reads RRVEDSDDHFV. The region spanning 312 to 436 is the BAH domain; that stretch reads EIYHLDDDVY…VAYSTFANLP (125 aa). The SAM-dependent MTase C5-type domain occupies 479 to 1017; the sequence is ASLLDLYSGC…YALGLAYRGE (539 aa). The Chromo domain maps to 584-649; the sequence is FDVEELLEIC…KGHKENILPL (66 aa). The active site involves Cys-662.

This sequence belongs to the class I-like SAM-binding methyltransferase superfamily. C5-methyltransferase family.

The protein localises to the nucleus. The catalysed reaction is a 2'-deoxycytidine in DNA + S-adenosyl-L-methionine = a 5-methyl-2'-deoxycytidine in DNA + S-adenosyl-L-homocysteine + H(+). In terms of biological role, involved in CpXpG DNA methylation. May not play a major role in maintaining CpXpG methylation. The polypeptide is DNA (cytosine-5)-methyltransferase CMT1 (Oryza sativa subsp. japonica (Rice)).